Consider the following 182-residue polypeptide: Large ribosomal subunit protein uL5 (182 aa).

It belongs to the universal ribosomal protein uL5 family. Part of the 50S ribosomal subunit; part of the 5S rRNA/L5/L18/L25 subcomplex. Contacts the 5S rRNA and the P site tRNA. Forms a bridge to the 30S subunit in the 70S ribosome.

Its function is as follows. This is one of the proteins that bind and probably mediate the attachment of the 5S RNA into the large ribosomal subunit, where it forms part of the central protuberance. In the 70S ribosome it contacts protein S13 of the 30S subunit (bridge B1b), connecting the 2 subunits; this bridge is implicated in subunit movement. Contacts the P site tRNA; the 5S rRNA and some of its associated proteins might help stabilize positioning of ribosome-bound tRNAs. The protein is Large ribosomal subunit protein uL5 of Trichormus variabilis (strain ATCC 29413 / PCC 7937) (Anabaena variabilis).